We begin with the raw amino-acid sequence, 261 residues long: Lys-63-specific deubiquitinase BRCC36 (261 aa).

An MPN domain is found at 6 to 149 (VHIQGDAFLV…YTCFQSVQAQ (144 aa)). 3 residues coordinate Zn(2+): histidine 92, histidine 94, and aspartate 105. The short motif at 92 to 105 (HSHPHITVWPSHVD) is the JAMM motif element.

The protein belongs to the peptidase M67A family. BRCC36 subfamily. As to quaternary structure, component of the BRCA1-A complex, at least composed of brca1, bard1, uimc1/rap80, abraxas1, brcc3/brcc36, babam2 and babam1/nba1. In the BRCA1-A complex, interacts directly with abraxas1 and babam2. Component of the BRISC complex, at least composed of abraxas2, brcc3/brcc36, babam2 and babam1/nba1. Within the complex, interacts directly with abraxas2. Both the BRCA1-A complex and the BRISC complex bind polyubiquitin. Zn(2+) is required as a cofactor.

It localises to the nucleus. It is found in the cytoplasm. The protein localises to the cytoskeleton. The protein resides in the spindle pole. Functionally, metalloprotease that specifically cleaves 'Lys-63'-linked polyubiquitin chains. Does not have activity toward 'Lys-48'-linked polyubiquitin chains. Component of the BRCA1-A complex, a complex that specifically recognizes 'Lys-63'-linked ubiquitinated histones H2A and H2AX at DNA lesions sites, leading to target the brca1-bard1 heterodimer to sites of DNA damage at double-strand breaks (DSBs). In the BRCA1-A complex, it specifically removes 'Lys-63'-linked ubiquitin on histones H2A and H2AX, antagonizing the rnf8-dependent ubiquitination at double-strand breaks (DSBs). Catalytic subunit of the BRISC complex, a multiprotein complex that specifically cleaves 'Lys-63'-linked ubiquitin in various substrates. Mediates the specific 'Lys-63'-specific deubiquitination associated with the COP9 signalosome complex (CSN), via the interaction of the BRISC complex with the CSN complex. The BRISC complex is required for normal mitotic spindle assembly and microtubule attachment to kinetochores via its role in deubiquitinating numa1. Plays a role in interferon signaling via its role in the deubiquitination of the interferon receptor ifnar1; deubiquitination increases ifnar1 activity by enhancing its stability and cell surface expression. Acts as a regulator of the NLRP3 inflammasome by mediating deubiquitination of nlrp3. Down-regulates the response to bacterial lipopolysaccharide (LPS) via its role in ifnar1 deubiquitination. The sequence is that of Lys-63-specific deubiquitinase BRCC36 (brcc3) from Xenopus tropicalis (Western clawed frog).